The chain runs to 223 residues: Protein UGX2 (223 aa).

Over residues 78 to 95 (SNKRAKMKSKTKLTRTAK) the composition is skewed to basic residues. The disordered stretch occupies residues 78 to 117 (SNKRAKMKSKTKLTRTAKQRRESPVCERDESDEDNDSDHY). Basic and acidic residues predominate over residues 96–105 (QRRESPVCER).

This Saccharomyces cerevisiae (strain ATCC 204508 / S288c) (Baker's yeast) protein is Protein UGX2 (UGX2).